Reading from the N-terminus, the 291-residue chain is Aspartate carbamoyltransferase catalytic subunit (291 aa).

Carbamoyl phosphate contacts are provided by R49 and T50. An L-aspartate-binding site is contributed by K77. 3 residues coordinate carbamoyl phosphate: R99, H127, and Q130. The L-aspartate site is built by R160 and R210. 2 residues coordinate carbamoyl phosphate: G249 and P250.

Belongs to the aspartate/ornithine carbamoyltransferase superfamily. ATCase family. As to quaternary structure, heterododecamer (2C3:3R2) of six catalytic PyrB chains organized as two trimers (C3), and six regulatory PyrI chains organized as three dimers (R2).

It carries out the reaction carbamoyl phosphate + L-aspartate = N-carbamoyl-L-aspartate + phosphate + H(+). It functions in the pathway pyrimidine metabolism; UMP biosynthesis via de novo pathway; (S)-dihydroorotate from bicarbonate: step 2/3. Its function is as follows. Catalyzes the condensation of carbamoyl phosphate and aspartate to form carbamoyl aspartate and inorganic phosphate, the committed step in the de novo pyrimidine nucleotide biosynthesis pathway. The chain is Aspartate carbamoyltransferase catalytic subunit from Sulfurimonas denitrificans (strain ATCC 33889 / DSM 1251) (Thiomicrospira denitrificans (strain ATCC 33889 / DSM 1251)).